The following is a 69-amino-acid chain: DNA gyrase inhibitor YacG (69 aa).

4 residues coordinate Zn(2+): cysteine 12, cysteine 15, cysteine 31, and cysteine 35. The tract at residues 49 to 69 (RVPVEPKPDEGETPDQAERPQ) is disordered.

It belongs to the DNA gyrase inhibitor YacG family. As to quaternary structure, interacts with GyrB. Requires Zn(2+) as cofactor.

Inhibits all the catalytic activities of DNA gyrase by preventing its interaction with DNA. Acts by binding directly to the C-terminal domain of GyrB, which probably disrupts DNA binding by the gyrase. The chain is DNA gyrase inhibitor YacG from Thiobacillus denitrificans (strain ATCC 25259 / T1).